A 694-amino-acid chain; its full sequence is Type VI secretion system spike protein VgrG2 (694 aa).

This sequence belongs to the VgrG protein family.

It localises to the secreted. Its function is as follows. Part of the type VI secretion system specialized secretion system, which delivers several virulence factors in both prokaryotic and eukaryotic cells during infection. Forms the spike at the tip of the elongating tube formed by haemolysin co-regulated protein Hcp. Allows the delivery of the VasX antibacterial toxin to target cells where it exerts its toxicity. The sequence is that of Type VI secretion system spike protein VgrG2 (vgrG2) from Vibrio cholerae serotype O1 (strain ATCC 39315 / El Tor Inaba N16961).